A 129-amino-acid polypeptide reads, in one-letter code: Small ribosomal subunit protein uS12 (129 aa).

Aspartate 89 is modified (3-methylthioaspartic acid).

It belongs to the universal ribosomal protein uS12 family. As to quaternary structure, part of the 30S ribosomal subunit. Contacts proteins S8 and S17. May interact with IF1 in the 30S initiation complex.

Its function is as follows. With S4 and S5 plays an important role in translational accuracy. Functionally, interacts with and stabilizes bases of the 16S rRNA that are involved in tRNA selection in the A site and with the mRNA backbone. Located at the interface of the 30S and 50S subunits, it traverses the body of the 30S subunit contacting proteins on the other side and probably holding the rRNA structure together. The combined cluster of proteins S8, S12 and S17 appears to hold together the shoulder and platform of the 30S subunit. In Rickettsia akari (strain Hartford), this protein is Small ribosomal subunit protein uS12.